Reading from the N-terminus, the 146-residue chain is Hemoglobin subunit beta (146 aa).

An N-acetylvaline modification is found at Val-1. The region spanning 2 to 146 (HLTAEEKNAI…VANALAHKYH (145 aa)) is the Globin domain. Phosphothreonine is present on Thr-12. The residue at position 59 (Lys-59) is an N6-acetyllysine. His-63 is a heme b binding site. Lys-82 carries the N6-acetyllysine modification. His-92 serves as a coordination point for heme b. Cys-93 bears the S-nitrosocysteine mark. Lys-144 carries the N6-acetyllysine modification.

It belongs to the globin family. As to quaternary structure, heterotetramer of two alpha chains and two beta chains. In terms of tissue distribution, red blood cells.

In terms of biological role, involved in oxygen transport from the lung to the various peripheral tissues. This Osphranter rufus (Red kangaroo) protein is Hemoglobin subunit beta (HBB).